Consider the following 742-residue polypeptide: Two-component response regulator-like PRR37 (742 aa).

Residues 63–181 (KVLLVDSDDS…ELKNLWQHVW (119 aa)) enclose the Response regulatory domain. Over residues 186 to 195 (SSSGSGSESG) the composition is skewed to low complexity. 7 disordered regions span residues 186 to 249 (SSSG…SWTK), 290 to 346 (PCTS…PLQN), 377 to 402 (QQAARAANAPNCSSKVPEGKDKNRDN), 478 to 517 (MKSNSDAAPIKQGSNGSSNNNDMGSTTKNVVTKPSTNKER), 533 to 568 (FHPAQHWTSPANTTGKEKTDEVANNAAKRAQPGEVQ), 590 to 671 (NGGS…GNDM), and 697 to 742 (NFGK…AADR). A compositionally biased stretch (polar residues) spans 236–248 (DNGSGTQAQSSWT). Positions 299-313 (KQKETNDDFKGKDLE) are enriched in basic and acidic residues. The segment covering 318–330 (RNLNTAYQSSPNE) has biased composition (polar residues). The segment covering 331-341 (RSIKPTDRRNE) has biased composition (basic and acidic residues). Residues 490–502 (GSNGSSNNNDMGS) are compositionally biased toward low complexity. The span at 503-512 (TTKNVVTKPS) shows a compositional bias: polar residues. The span at 618 to 634 (NGSNSGSNNGSNGQNGS) shows a compositional bias: low complexity. Positions 656 to 667 (GPGGGNGSGSGS) are enriched in gly residues. Positions 682–724 (RVAAVIKFRQKRKERNFGKKVRYQSRKRLAEQRPRVRGQFVRQ) constitute a CCT domain. Basic residues predominate over residues 697 to 708 (NFGKKVRYQSRK). The segment covering 719 to 731 (GQFVRQAVQDQQQ) has biased composition (low complexity).

The protein belongs to the ARR-like family.

The protein localises to the nucleus. Probable transcription factor involved in the regulation of flowering time under long day (LD) conditions. Functions as a repressor of flowering. Controls flowering time by negatively regulating the expression of HD3A. Acts downstream of the phytochrome B to repress the expression of EHD1, an activator of the flowering promoter genes HD3A and RFT1. Controls photoperiodic flowering response. Seems to be one of the component of the circadian clock. Expression of several members of the ARR-like family is controlled by circadian rhythm. The particular coordinated sequential expression of PRR73, PRR37, PRR95, PRR59 and PPR1 result to circadian waves that may be at the basis of the endogenous circadian clock. This is Two-component response regulator-like PRR37 from Oryza sativa subsp. japonica (Rice).